Consider the following 320-residue polypeptide: Adhesin MafA 1/4 (320 aa).

A signal peptide spans 1–18 (MRARLLIPILFSVFILSA). Cysteine 19 carries the N-palmitoyl cysteine lipid modification. The S-diacylglycerol cysteine moiety is linked to residue cysteine 19. The tract at residues 287-320 (NHTGNSAPSVEADNSHEGYGYSDEAVRQHRQGQP) is disordered.

The protein belongs to the MafA family.

It localises to the cell outer membrane. This is Adhesin MafA 1/4 (mafA1) from Neisseria gonorrhoeae (strain ATCC 700825 / FA 1090).